The following is a 355-amino-acid chain: NAD-dependent protein deacylase sirtuin-6 (355 aa).

N-acetylserine is present on Ser-2. A Phosphoserine modification is found at Ser-10. The Deacetylase sirtuin-type domain occupies 27–272; that stretch reads PEELERKVWE…TQLMKHLGLE (246 aa). Residue Lys-33 is modified to N6-acetyllysine. Ala-53, Thr-57, Phe-64, Arg-65, Trp-71, Gln-113, and His-133 together coordinate NAD(+). Catalysis depends on His-133, which acts as the Proton acceptor. Positions 141, 144, and 166 each coordinate Zn(2+). A Glycyl lysine isopeptide (Lys-Gly) (interchain with G-Cter in ubiquitin) cross-link involves residue Lys-170. Cys-177 provides a ligand contact to Zn(2+). NAD(+) is bound by residues Gly-214, Ser-216, Asn-240, Gln-242, and Val-258. Positions 284 to 355 are disordered; sequence KALPPLPRPP…KRVKAEVTPS (72 aa). Residues 287–296 are compositionally biased toward pro residues; it reads PPLPRPPTPK. At Thr-294 the chain carries Phosphothreonine. Phosphoserine is present on residues Ser-303 and Ser-330.

It belongs to the sirtuin family. Class IV subfamily. Homodimer; binds to nucleosomes and DNA ends as a homodimer. Interacts with RELA; interferes with RELA binding to target DNA. Interacts with SMARCA5; promoting recruitment of SMARCA5/SNF2H to double-strand breaks (DSBs) sites. Interacts with the mTORC2 complex; preventing the ability of SIRT6 to deacetylate FOXO1. Interacts with the CLOCK-BMAL1 complex; recruited by the CLOCK-BMAL1 complex to regulate expression of clock-controlled genes. Interacts with CSNK2A2; preventing CSNK2A2 localization to the nucleus. In terms of processing, acetylated at Lys-33. Deacetylation at Lys-33 by SIRT1 promotes homomultimerization and binding to double-strand breaks (DSBs) sites. Post-translationally, phosphorylation at Ser-10 by MAPK8/JNK1 in response to oxidative stress stimulates the mono-ADP-ribosyltransferase activity on PARP1, leading to PARP1 recruitment to double-strand breaks (DSBs). Monoubiquitinated at Lys-170 by STUB1/CHIP, preventing its degradation by the proteasome. In terms of processing, sumoylated, leading to specifically decrease ability to deacetylate histone H3 at 'Lys-56' (H3K56ac).

The protein localises to the nucleus. It is found in the chromosome. It localises to the telomere. Its subcellular location is the endoplasmic reticulum. It catalyses the reaction N(6)-acetyl-L-lysyl-[protein] + NAD(+) + H2O = 2''-O-acetyl-ADP-D-ribose + nicotinamide + L-lysyl-[protein]. The enzyme catalyses N(6)-tetradecanoyl-L-lysyl-[protein] + NAD(+) + H2O = 2''-O-tetradecanoyl-ADP-D-ribose + nicotinamide + L-lysyl-[protein]. The catalysed reaction is N(6)-hexadecanoyl-L-lysyl-[protein] + NAD(+) + H2O = 2''-O-hexadecanoyl-ADP-D-ribose + nicotinamide + L-lysyl-[protein]. It carries out the reaction L-lysyl-[protein] + NAD(+) = N(6)-(ADP-D-ribosyl)-L-lysyl-[protein] + nicotinamide + H(+). It catalyses the reaction L-arginyl-[protein] + NAD(+) = N(omega)-(ADP-D-ribosyl)-L-arginyl-[protein] + nicotinamide + H(+). Compared to the defatty-acylase activity, the protein deacetylase activity is weak in vitro, and requires activation. The histone deacetylase activity is strongly activated upon binding to nucleosomes and chromatin in vivo. Two molecules of SIRT6 associate with the acidic patch of one nucleosome, while the C-terminal disordered region of SIRT6 associates with nucleosomal DNA, leading to efficient histone deacetylation. The protein-lysine deacetylase activity is also activated by long-chain free fatty-acids. Functionally, NAD-dependent protein deacetylase, deacylase and mono-ADP-ribosyltransferase that plays an essential role in DNA damage repair, telomere maintenance, metabolic homeostasis, inflammation, tumorigenesis and aging. Displays protein-lysine deacetylase or defatty-acylase (demyristoylase and depalmitoylase) activity, depending on the context. Acts as a key histone deacetylase by catalyzing deacetylation of histone H3 at 'Lys-9', 'Lys-18' and 'Lys-56' (H3K9ac, H3K18ac and H3K56ac, respectively), suppressing target gene expression of several transcription factors, including NF-kappa-B. Acts as an inhibitor of transcription elongation by mediating deacetylation of H3K9ac and H3K56ac, preventing release of NELFE from chromatin and causing transcriptional pausing. Involved in DNA repair by promoting double-strand break (DSB) repair: acts as a DSB sensor by recognizing and binding DSB sites, leading to (1) recruitment of DNA repair proteins, such as SMARCA5/SNF2H, and (2) deacetylation of histone H3K9ac and H3K56ac. SIRT6 participation to DSB repair is probably involved in extension of life span. Also promotes DNA repair by deacetylating non-histone proteins, such as DDB2 and p53/TP53. Specifically deacetylates H3K18ac at pericentric heterochromatin, thereby maintaining pericentric heterochromatin silencing at centromeres and protecting against genomic instability and cellular senescence. Involved in telomere maintenance by catalyzing deacetylation of histone H3 in telomeric chromatin, regulating telomere position effect and telomere movement in response to DNA damage. Required for embryonic stem cell differentiation by mediating histone deacetylation of H3K9ac. Plays a major role in metabolism by regulating processes such as glycolysis, gluconeogenesis, insulin secretion and lipid metabolism. Inhibits glycolysis via histone deacetylase activity and by acting as a corepressor of the transcription factor HIF1A, thereby controlling the expression of multiple glycolytic genes. Has tumor suppressor activity by repressing glycolysis, thereby inhibiting the Warburg effect. Also regulates glycolysis and tumorigenesis by mediating deacetylation and nuclear export of non-histone proteins, such as isoform M2 of PKM (PKM2). Acts as a negative regulator of gluconeogenesis by mediating deacetylation of non-histone proteins, such as FOXO1 and KAT2A/GCN5. Promotes beta-oxidation of fatty acids during fasting by catalyzing deacetylation of NCOA2, inducing coactivation of PPARA. Acts as a regulator of lipid catabolism in brown adipocytes, both by catalyzing deacetylation of histones and non-histone proteins, such as FOXO1. Also acts as a regulator of circadian rhythms, both by regulating expression of clock-controlled genes involved in lipid and carbohydrate metabolism, and by catalyzing deacetylation of PER2. The defatty-acylase activity is specifically involved in regulation of protein secretion. Has high activity toward long-chain fatty acyl groups and mediates protein-lysine demyristoylation and depalmitoylation of target proteins, such as RRAS2 and TNF, thereby regulating their secretion. Also acts as a mono-ADP-ribosyltransferase by mediating mono-ADP-ribosylation of PARP1, TRIM28/KAP1 or SMARCC2/BAF170. Mono-ADP-ribosyltransferase activity is involved in DNA repair, cellular senescence, repression of LINE-1 retrotransposon elements and regulation of transcription. This chain is NAD-dependent protein deacylase sirtuin-6, found in Castor canadensis (American beaver).